Consider the following 103-residue polypeptide: Cell division topological specificity factor (103 aa).

The protein belongs to the MinE family.

Functionally, prevents the cell division inhibition by proteins MinC and MinD at internal division sites while permitting inhibition at polar sites. This ensures cell division at the proper site by restricting the formation of a division septum at the midpoint of the long axis of the cell. The chain is Cell division topological specificity factor from Prochlorococcus marinus (strain MIT 9211).